The following is a 335-amino-acid chain: MGHPLLLPLLLLLHTCVPASWGLRCMQCKSNGDCRVEECALGQDLCRTTIVRMWEEGEELELVEKSCTHSEKTNRTMSYRTGLKITSLTEVVCGLDLCNQGNSGRAVTFSRSRYLECISCGSSDMSCERGRHQSLQCRSPEEQCLDVVTHWIQEGEEGRPKDDRHLRGCGYLPSCPGSSGFHNNDTFHFLKCCNTTKCNEGPILELENLPQNGHQCYSCKGNSTHGCSSEETFLIDCRGPMNQCLVATGTYEPKNQSYMVRGCVTASMCQRAHLGDAFSMHHINVSCCTESGCNHPDLDIQYRKGAAPQPGPAHLSLTITLLMTARLWGGTLLWT.

The signal sequence occupies residues 1–22; that stretch reads MGHPLLLPLLLLLHTCVPASWG. UPAR/Ly6 domains follow at residues 23–114, 115–213, and 214–305; these read LRCM…RSRY, LECI…PQNG, and HQCY…YRKG. Disulfide bonds link Cys25–Cys46, Cys28–Cys34, and Cys39–Cys67. Asn74 carries N-linked (GlcNAc...) asparagine glycosylation. Cystine bridges form between Cys93–Cys98, Cys117–Cys144, Cys120–Cys127, Cys137–Cys169, Cys175–Cys192, Cys193–Cys198, Cys216–Cys244, Cys219–Cys227, Cys237–Cys263, Cys269–Cys287, and Cys288–Cys293. Asn184, Asn194, Asn222, Asn255, and Asn284 each carry an N-linked (GlcNAc...) asparagine glycan. Gly305 is lipidated: GPI-anchor amidated glycine. The propeptide at 306-335 is removed in mature form; the sequence is AAPQPGPAHLSLTITLLMTARLWGGTLLWT.

As to quaternary structure, monomer. Interacts (via the UPAR/Ly6 domains) with SRPX2. Interacts with MRC2. Interacts with FAP (seprase); the interaction occurs at the cell surface of invadopodia membrane. Interacts with SORL1 (via N-terminal ectodomain); this interaction decreases PLAUR internalization. The ternary complex composed of PLAUR-PLAU-SERPINE1 also interacts with SORL1.

It localises to the cell membrane. The protein localises to the cell projection. It is found in the invadopodium membrane. In terms of biological role, acts as a receptor for urokinase plasminogen activator. Plays a role in localizing and promoting plasmin formation. Mediates the proteolysis-independent signal transduction activation effects of U-PA. It is subject to negative-feedback regulation by U-PA which cleaves it into an inactive form. The chain is Urokinase plasminogen activator surface receptor (PLAUR) from Macaca fascicularis (Crab-eating macaque).